The following is a 105-amino-acid chain: Probable tetrachloroethene reductive dehalogenase membrane anchor protein (105 aa).

3 consecutive transmembrane segments (helical) span residues 3-23, 35-55, and 66-86; these read IYDVLIWMALGMTALLIQYGI, IPLQICGFLANFFFIFALAWG, and AIGMGFIFFGGTALIPAIITY.

The protein belongs to the PceB family.

It is found in the cell membrane. In terms of biological role, may act as a membrane anchor for the tetrachloroethene reductive dehalogenase PceA. In Desulfitobacterium hafniense (Desulfitobacterium frappieri), this protein is Probable tetrachloroethene reductive dehalogenase membrane anchor protein.